We begin with the raw amino-acid sequence, 194 residues long: ATP-dependent Clp protease proteolytic subunit 1 (194 aa).

Ser98 (nucleophile) is an active-site residue. His123 is a catalytic residue.

The protein belongs to the peptidase S14 family. In terms of assembly, fourteen ClpP subunits assemble into 2 heptameric rings which stack back to back to give a disk-like structure with a central cavity, resembling the structure of eukaryotic proteasomes.

It localises to the cytoplasm. The enzyme catalyses Hydrolysis of proteins to small peptides in the presence of ATP and magnesium. alpha-casein is the usual test substrate. In the absence of ATP, only oligopeptides shorter than five residues are hydrolyzed (such as succinyl-Leu-Tyr-|-NHMec, and Leu-Tyr-Leu-|-Tyr-Trp, in which cleavage of the -Tyr-|-Leu- and -Tyr-|-Trp bonds also occurs).. Its function is as follows. Cleaves peptides in various proteins in a process that requires ATP hydrolysis. Has a chymotrypsin-like activity. Plays a major role in the degradation of misfolded proteins. ClpXP1 is involved in the complete degradation of the Site-2 clipped anti-sigma-W factor RsiW. This results in the release of SigW and the transcription activation of the genes under the control of the sigma-W factor. The polypeptide is ATP-dependent Clp protease proteolytic subunit 1 (Halalkalibacterium halodurans (strain ATCC BAA-125 / DSM 18197 / FERM 7344 / JCM 9153 / C-125) (Bacillus halodurans)).